A 648-amino-acid polypeptide reads, in one-letter code: Biosynthetic arginine decarboxylase (648 aa).

Lys-109 bears the N6-(pyridoxal phosphate)lysine mark. Substrate is bound at residue 291 to 301 (LDVGGGLGVDY).

The protein belongs to the Orn/Lys/Arg decarboxylase class-II family. SpeA subfamily. The cofactor is Mg(2+). Pyridoxal 5'-phosphate is required as a cofactor.

It catalyses the reaction L-arginine + H(+) = agmatine + CO2. Functionally, catalyzes the biosynthesis of agmatine from arginine. The polypeptide is Biosynthetic arginine decarboxylase (Prochlorococcus marinus (strain MIT 9313)).